Consider the following 235-residue polypeptide: Orotidine 5'-phosphate decarboxylase (235 aa).

Residues Asp17, Lys39, 66 to 75, Thr121, Arg182, Gln191, Gly211, and Arg212 contribute to the substrate site; that span reads DLKLHDIGNT. The active-site Proton donor is the Lys68.

Belongs to the OMP decarboxylase family. Type 1 subfamily. Homodimer.

It carries out the reaction orotidine 5'-phosphate + H(+) = UMP + CO2. The protein operates within pyrimidine metabolism; UMP biosynthesis via de novo pathway; UMP from orotate: step 2/2. Functionally, catalyzes the decarboxylation of orotidine 5'-monophosphate (OMP) to uridine 5'-monophosphate (UMP). The polypeptide is Orotidine 5'-phosphate decarboxylase (Rhodopseudomonas palustris (strain HaA2)).